Reading from the N-terminus, the 295-residue chain is Protease HtpX (295 aa).

2 consecutive transmembrane segments (helical) span residues 4 to 24 (ILLF…TLSL) and 41 to 61 (SQLL…SLFI). H147 is a Zn(2+) binding site. The active site involves E148. H151 provides a ligand contact to Zn(2+). 2 consecutive transmembrane segments (helical) span residues 158–178 (VTLA…ARII) and 199–219 (IATI…VMWF). Residue E224 coordinates Zn(2+).

Belongs to the peptidase M48B family. Zn(2+) serves as cofactor.

It localises to the cell inner membrane. The polypeptide is Protease HtpX (Pseudomonas fluorescens (strain Pf0-1)).